We begin with the raw amino-acid sequence, 104 residues long: SOSS complex subunit C (104 aa).

Alanine 2 carries the N-acetylalanine modification. Phosphoserine is present on serine 50.

This sequence belongs to the SOSS-C family. Component of the SOSS complex, composed of SOSS-B (SOSS-B1/NABP2 or SOSS-B2/NABP1), SOSS-A/INTS3 and SOSS-C/INIP. SOSS complexes containing SOSS-B1/NABP2 are more abundant than complexes containing SOSS-B2/NABP1. Interacts with INTS3; the interaction is direct.

It localises to the nucleus. In terms of biological role, component of the SOSS complex, a multiprotein complex that functions downstream of the MRN complex to promote DNA repair and G2/M checkpoint. The SOSS complex associates with single-stranded DNA at DNA lesions and influences diverse endpoints in the cellular DNA damage response including cell-cycle checkpoint activation, recombinational repair and maintenance of genomic stability. Required for efficient homologous recombination-dependent repair of double-strand breaks (DSBs) and ATM-dependent signaling pathways. This Homo sapiens (Human) protein is SOSS complex subunit C (INIP).